The sequence spans 141 residues: MAKKVIKMVKLQIPAGKANPAPPVGPALGQAGVNIMGFCKEFNARTSDQAGLIIPVEITVFEDRSFTFVTKTPPAAVLLKKAAGIESGSGEPNRNKVATVKRDKVREIAETKMPDLNAADVEAAMRMVEGTARSMGIVIED.

This sequence belongs to the universal ribosomal protein uL11 family. In terms of assembly, part of the ribosomal stalk of the 50S ribosomal subunit. Interacts with L10 and the large rRNA to form the base of the stalk. L10 forms an elongated spine to which L12 dimers bind in a sequential fashion forming a multimeric L10(L12)X complex. Post-translationally, one or more lysine residues are methylated.

Forms part of the ribosomal stalk which helps the ribosome interact with GTP-bound translation factors. In Halalkalibacterium halodurans (strain ATCC BAA-125 / DSM 18197 / FERM 7344 / JCM 9153 / C-125) (Bacillus halodurans), this protein is Large ribosomal subunit protein uL11A.